The chain runs to 318 residues: tRNA pseudouridine synthase B (318 aa).

The active-site Nucleophile is aspartate 47.

The protein belongs to the pseudouridine synthase TruB family. Type 1 subfamily.

The catalysed reaction is uridine(55) in tRNA = pseudouridine(55) in tRNA. Responsible for synthesis of pseudouridine from uracil-55 in the psi GC loop of transfer RNAs. The sequence is that of tRNA pseudouridine synthase B from Shewanella putrefaciens (strain CN-32 / ATCC BAA-453).